A 124-amino-acid polypeptide reads, in one-letter code: Small ribosomal subunit protein uS13 (124 aa).

Positions 89-124 (GRRHRQGLPVRGQRTKTNARTRKGPKRTVAGKKKAK) are disordered. Basic residues predominate over residues 101 to 124 (QRTKTNARTRKGPKRTVAGKKKAK).

Belongs to the universal ribosomal protein uS13 family. In terms of assembly, part of the 30S ribosomal subunit. Forms a loose heterodimer with protein S19. Forms two bridges to the 50S subunit in the 70S ribosome.

In terms of biological role, located at the top of the head of the 30S subunit, it contacts several helices of the 16S rRNA. In the 70S ribosome it contacts the 23S rRNA (bridge B1a) and protein L5 of the 50S subunit (bridge B1b), connecting the 2 subunits; these bridges are implicated in subunit movement. Contacts the tRNAs in the A and P-sites. This Nocardioides sp. (strain ATCC BAA-499 / JS614) protein is Small ribosomal subunit protein uS13.